Here is a 231-residue protein sequence, read N- to C-terminus: 2-C-methyl-D-erythritol 4-phosphate cytidylyltransferase (231 aa).

The protein belongs to the IspD/TarI cytidylyltransferase family. IspD subfamily. Homodimer.

It catalyses the reaction 2-C-methyl-D-erythritol 4-phosphate + CTP + H(+) = 4-CDP-2-C-methyl-D-erythritol + diphosphate. It participates in isoprenoid biosynthesis; isopentenyl diphosphate biosynthesis via DXP pathway; isopentenyl diphosphate from 1-deoxy-D-xylulose 5-phosphate: step 2/6. In terms of biological role, catalyzes the formation of 4-diphosphocytidyl-2-C-methyl-D-erythritol from CTP and 2-C-methyl-D-erythritol 4-phosphate (MEP). This Citrobacter koseri (strain ATCC BAA-895 / CDC 4225-83 / SGSC4696) protein is 2-C-methyl-D-erythritol 4-phosphate cytidylyltransferase.